A 212-amino-acid polypeptide reads, in one-letter code: MSTLADLRKNYSLGSLDISDVDPNPFGQFDRWFKQAIDAQLPEPNTMTLATADARGRPSARIVLIKGVDERGFVFFTNYESRKGQELAQNPHASLLFYWIELERQVRIEGTVVKTSPEESDAYFASRPVGSRIGAWASEQSKVIESRAALEAREREFSAQYGENPPRPPHWGGYRLIPDAIEFWQGRPSRLHDRLLYTHSGGAGWTITRLSP.

Substrate-binding positions include 8 to 11 (RKNY) and K66. Residues 61 to 66 (RIVLIK), 76 to 77 (FT), R82, K83, and Q105 contribute to the FMN site. Positions 123, 127, and 131 each coordinate substrate. FMN contacts are provided by residues 140–141 (QS) and W184. 190-192 (RLH) contributes to the substrate binding site. Residue R194 coordinates FMN.

It belongs to the pyridoxamine 5'-phosphate oxidase family. Homodimer. It depends on FMN as a cofactor.

The catalysed reaction is pyridoxamine 5'-phosphate + O2 + H2O = pyridoxal 5'-phosphate + H2O2 + NH4(+). It catalyses the reaction pyridoxine 5'-phosphate + O2 = pyridoxal 5'-phosphate + H2O2. It functions in the pathway cofactor metabolism; pyridoxal 5'-phosphate salvage; pyridoxal 5'-phosphate from pyridoxamine 5'-phosphate: step 1/1. It participates in cofactor metabolism; pyridoxal 5'-phosphate salvage; pyridoxal 5'-phosphate from pyridoxine 5'-phosphate: step 1/1. In terms of biological role, catalyzes the oxidation of either pyridoxine 5'-phosphate (PNP) or pyridoxamine 5'-phosphate (PMP) into pyridoxal 5'-phosphate (PLP). This Paraburkholderia phymatum (strain DSM 17167 / CIP 108236 / LMG 21445 / STM815) (Burkholderia phymatum) protein is Pyridoxine/pyridoxamine 5'-phosphate oxidase.